The primary structure comprises 430 residues: Transcription factor iws-1 (430 aa).

A compositionally biased stretch (low complexity) spans 1-14 (MSDAASPAGSPAAE). The interval 1–153 (MSDAASPAGS…EENLTPDERR (153 aa)) is disordered. Residues 15–33 (PTEHRDEDQVNETHQDDGS) show a composition bias toward basic and acidic residues. Acidic residues predominate over residues 52-63 (VLSEIDENEFGD). Residues 95 to 104 (KEGRRPKKRS) show a composition bias toward basic residues. Over residues 124–137 (VRAEGERRARKEVE) the composition is skewed to basic and acidic residues. Residues 244 to 321 (QSVRYFLEPL…GEWSRLILKR (78 aa)) enclose the TFIIS N-terminal domain. The disordered stretch occupies residues 402–430 (GQAPTDHRPIGHSGHEAFRRMTQKGKGKR). The span at 406 to 420 (TDHRPIGHSGHEAFR) shows a compositional bias: basic and acidic residues.

This sequence belongs to the IWS1 family.

It is found in the nucleus. Its function is as follows. Transcription factor involved in RNA polymerase II transcription regulation. May function in both SPT15/TBP post-recruitment and recruitment steps of transcription. The chain is Transcription factor iws-1 (iws-1) from Neurospora crassa (strain ATCC 24698 / 74-OR23-1A / CBS 708.71 / DSM 1257 / FGSC 987).